The primary structure comprises 166 residues: Nucleotide-binding protein Acid_3194 (166 aa).

It belongs to the YajQ family.

Nucleotide-binding protein. In Solibacter usitatus (strain Ellin6076), this protein is Nucleotide-binding protein Acid_3194.